The chain runs to 100 residues: Urease subunit gamma (100 aa).

This sequence belongs to the urease gamma subunit family. As to quaternary structure, heterotrimer of UreA (gamma), UreB (beta) and UreC (alpha) subunits. Three heterotrimers associate to form the active enzyme.

It localises to the cytoplasm. The enzyme catalyses urea + 2 H2O + H(+) = hydrogencarbonate + 2 NH4(+). It participates in nitrogen metabolism; urea degradation; CO(2) and NH(3) from urea (urease route): step 1/1. The protein is Urease subunit gamma of Blochmanniella floridana.